Consider the following 423-residue polypeptide: tRNA(Ile)-lysidine synthase (423 aa).

An ATP-binding site is contributed by 18 to 23; it reads SGGADS.

The protein belongs to the tRNA(Ile)-lysidine synthase family.

Its subcellular location is the cytoplasm. The catalysed reaction is cytidine(34) in tRNA(Ile2) + L-lysine + ATP = lysidine(34) in tRNA(Ile2) + AMP + diphosphate + H(+). Its function is as follows. Ligates lysine onto the cytidine present at position 34 of the AUA codon-specific tRNA(Ile) that contains the anticodon CAU, in an ATP-dependent manner. Cytidine is converted to lysidine, thus changing the amino acid specificity of the tRNA from methionine to isoleucine. This is tRNA(Ile)-lysidine synthase from Aromatoleum aromaticum (strain DSM 19018 / LMG 30748 / EbN1) (Azoarcus sp. (strain EbN1)).